Consider the following 21-residue polypeptide: 5-methyltetrahydropteroyltriglutamate--homocysteine methyltransferase (21 aa).

It belongs to the vitamin-B12 independent methionine synthase family. Zn(2+) serves as cofactor.

The protein resides in the cytoplasm. It carries out the reaction 5-methyltetrahydropteroyltri-L-glutamate + L-homocysteine = tetrahydropteroyltri-L-glutamate + L-methionine. Its pathway is amino-acid biosynthesis; L-methionine biosynthesis via de novo pathway; L-methionine from L-homocysteine (MetE route): step 1/1. Catalyzes the transfer of a methyl group from 5-methyltetrahydrofolate to homocysteine resulting in methionine formation. In Populus euphratica (Euphrates poplar), this protein is 5-methyltetrahydropteroyltriglutamate--homocysteine methyltransferase.